The sequence spans 364 residues: Methylthioribose-1-phosphate isomerase (364 aa).

D254 (proton donor) is an active-site residue.

This sequence belongs to the eIF-2B alpha/beta/delta subunits family. MtnA subfamily.

It localises to the cytoplasm. The protein resides in the nucleus. The catalysed reaction is 5-(methylsulfanyl)-alpha-D-ribose 1-phosphate = 5-(methylsulfanyl)-D-ribulose 1-phosphate. It participates in amino-acid biosynthesis; L-methionine biosynthesis via salvage pathway; L-methionine from S-methyl-5-thio-alpha-D-ribose 1-phosphate: step 1/6. Functionally, catalyzes the interconversion of methylthioribose-1-phosphate (MTR-1-P) into methylthioribulose-1-phosphate (MTRu-1-P). This is Methylthioribose-1-phosphate isomerase from Drosophila melanogaster (Fruit fly).